The primary structure comprises 240 residues: tRNA pseudouridine synthase A (240 aa).

Catalysis depends on Asp50, which acts as the Nucleophile. Tyr109 is a binding site for substrate.

This sequence belongs to the tRNA pseudouridine synthase TruA family. As to quaternary structure, homodimer.

The enzyme catalyses uridine(38/39/40) in tRNA = pseudouridine(38/39/40) in tRNA. Its function is as follows. Formation of pseudouridine at positions 38, 39 and 40 in the anticodon stem and loop of transfer RNAs. The sequence is that of tRNA pseudouridine synthase A from Campylobacter jejuni subsp. jejuni serotype O:6 (strain 81116 / NCTC 11828).